The chain runs to 116 residues: U30-theraphotoxin-Cg1a (116 aa).

The first 17 residues, methionine 1–serine 17, serve as a signal peptide directing secretion. A propeptide spanning residues leucine 18–arginine 53 is cleaved from the precursor. Residues isoleucine 24–alanine 46 are disordered. 4 disulfide bridges follow: cysteine 55/cysteine 69, cysteine 62/cysteine 75, cysteine 66/cysteine 112, and cysteine 68/cysteine 88.

It belongs to the neurotoxin 03 (Tx2) family. 02 subfamily. HNTX-XV sub-subfamily. As to expression, expressed by the venom gland.

It localises to the secreted. Its function is as follows. Probable ion channel inhibitor. The protein is U30-theraphotoxin-Cg1a of Chilobrachys guangxiensis (Chinese earth tiger tarantula).